The sequence spans 378 residues: Chaperone protein DnaJ 2 (378 aa).

In terms of domain architecture, J spans 4–68 (DYYAVLGVRR…QKKQVYDLGG (65 aa)). Residues 130-212 (GTTKDIQVDT…CAGDGRVRSR (83 aa)) form a CR-type zinc finger. 8 residues coordinate Zn(2+): cysteine 143, cysteine 146, cysteine 160, cysteine 163, cysteine 186, cysteine 189, cysteine 200, and cysteine 203. 4 CXXCXGXG motif repeats span residues 143 to 150 (CNTCNGEG), 160 to 167 (CDMCRGRG), 186 to 193 (CPQCQGFG), and 200 to 207 (CPECAGDG). Disordered stretches follow at residues 297–319 (RPGT…LRGG) and 351–378 (RGEE…FNGR). A compositionally biased stretch (polar residues) spans 358–367 (GQFQPGQQGL).

The protein belongs to the DnaJ family. As to quaternary structure, homodimer. Requires Zn(2+) as cofactor.

It localises to the cytoplasm. Functionally, participates actively in the response to hyperosmotic and heat shock by preventing the aggregation of stress-denatured proteins and by disaggregating proteins, also in an autonomous, DnaK-independent fashion. Unfolded proteins bind initially to DnaJ; upon interaction with the DnaJ-bound protein, DnaK hydrolyzes its bound ATP, resulting in the formation of a stable complex. GrpE releases ADP from DnaK; ATP binding to DnaK triggers the release of the substrate protein, thus completing the reaction cycle. Several rounds of ATP-dependent interactions between DnaJ, DnaK and GrpE are required for fully efficient folding. Also involved, together with DnaK and GrpE, in the DNA replication of plasmids through activation of initiation proteins. In Streptomyces coelicolor (strain ATCC BAA-471 / A3(2) / M145), this protein is Chaperone protein DnaJ 2.